The primary structure comprises 485 residues: Glutamyl-tRNA(Gln) amidotransferase subunit A (485 aa).

Residues lysine 78 and serine 153 each act as charge relay system in the active site. The Acyl-ester intermediate role is filled by serine 177.

It belongs to the amidase family. GatA subfamily. Heterotrimer of A, B and C subunits.

It carries out the reaction L-glutamyl-tRNA(Gln) + L-glutamine + ATP + H2O = L-glutaminyl-tRNA(Gln) + L-glutamate + ADP + phosphate + H(+). Its function is as follows. Allows the formation of correctly charged Gln-tRNA(Gln) through the transamidation of misacylated Glu-tRNA(Gln) in organisms which lack glutaminyl-tRNA synthetase. The reaction takes place in the presence of glutamine and ATP through an activated gamma-phospho-Glu-tRNA(Gln). The chain is Glutamyl-tRNA(Gln) amidotransferase subunit A from Bacillus cereus (strain ATCC 10987 / NRS 248).